A 130-amino-acid polypeptide reads, in one-letter code: Histone H2A type 1-F (130 aa).

Positions 1–22 (MSGRGKQGGKARAKAKTRSSRA) are disordered. Serine 2 carries the phosphoserine; by RPS6KA5 modification. At arginine 4 the chain carries Citrulline; alternate. The residue at position 4 (arginine 4) is a Symmetric dimethylarginine; by PRMT5; alternate. Residues lysine 6 and lysine 10 each carry the N6-(2-hydroxyisobutyryl)lysine modification. Basic residues predominate over residues 7–19 (QGGKARAKAKTRS). Lysine 10 is subject to N6-lactoyllysine; alternate. Lysine 37 bears the N6-(2-hydroxyisobutyryl)lysine; alternate mark. An N6-(beta-hydroxybutyryl)lysine; alternate modification is found at lysine 37. The residue at position 37 (lysine 37) is an N6-crotonyllysine; alternate. 3 positions are modified to N6-(2-hydroxyisobutyryl)lysine: lysine 75, lysine 76, and lysine 96. Residue lysine 96 is modified to N6-glutaryllysine; alternate. Glutamine 105 carries the N5-methylglutamine modification. Lysine 119 is subject to N6-(2-hydroxyisobutyryl)lysine; alternate. An N6-crotonyllysine; alternate mark is found at lysine 119 and lysine 120. Lysine 119 and lysine 120 each carry N6-glutaryllysine; alternate. Lysine 120 is covalently cross-linked (Glycyl lysine isopeptide (Lys-Gly) (interchain with G-Cter in ubiquitin); alternate). Phosphothreonine; by DCAF1 is present on threonine 121. Lysine 126 is modified (N6-crotonyllysine; alternate). Position 126 is an N6-glutaryllysine; alternate (lysine 126).

The protein belongs to the histone H2A family. The nucleosome is a histone octamer containing two molecules each of H2A, H2B, H3 and H4 assembled in one H3-H4 heterotetramer and two H2A-H2B heterodimers. The octamer wraps approximately 147 bp of DNA. Post-translationally, deiminated on Arg-4 in granulocytes upon calcium entry. In terms of processing, monoubiquitination of Lys-120 (H2AK119Ub) by RING1, TRIM37 and RNF2/RING2 complex gives a specific tag for epigenetic transcriptional repression and participates in X chromosome inactivation of female mammals. It is involved in the initiation of both imprinted and random X inactivation. Ubiquitinated H2A is enriched in inactive X chromosome chromatin. Ubiquitination of H2A functions downstream of methylation of 'Lys-27' of histone H3 (H3K27me). H2AK119Ub by RNF2/RING2 can also be induced by ultraviolet and may be involved in DNA repair. Following DNA double-strand breaks (DSBs), it is ubiquitinated through 'Lys-63' linkage of ubiquitin moieties by the E2 ligase UBE2N and the E3 ligases RNF8 and RNF168, leading to the recruitment of repair proteins to sites of DNA damage. Ubiquitination at Lys-14 and Lys-16 (H2AK13Ub and H2AK15Ub, respectively) in response to DNA damage is initiated by RNF168 that mediates monoubiquitination at these 2 sites, and 'Lys-63'-linked ubiquitin are then conjugated to monoubiquitin; RNF8 is able to extend 'Lys-63'-linked ubiquitin chains in vitro. H2AK119Ub and ionizing radiation-induced 'Lys-63'-linked ubiquitination (H2AK13Ub and H2AK15Ub) are distinct events. Phosphorylation on Ser-2 (H2AS1ph) is enhanced during mitosis. Phosphorylation on Ser-2 by RPS6KA5/MSK1 directly represses transcription. Acetylation of H3 inhibits Ser-2 phosphorylation by RPS6KA5/MSK1. Phosphorylation at Thr-121 (H2AT120ph) by DCAF1 is present in the regulatory region of many tumor suppresor genes and down-regulates their transcription. Post-translationally, symmetric dimethylation on Arg-4 by the PRDM1/PRMT5 complex may play a crucial role in the germ-cell lineage. In terms of processing, glutamine methylation at Gln-105 (H2AQ104me) by FBL is specifically dedicated to polymerase I. It is present at 35S ribosomal DNA locus and impairs binding of the FACT complex. Crotonylation (Kcr) is specifically present in male germ cells and marks testis-specific genes in post-meiotic cells, including X-linked genes that escape sex chromosome inactivation in haploid cells. Crotonylation marks active promoters and enhancers and confers resistance to transcriptional repressors. It is also associated with post-meiotically activated genes on autosomes. Post-translationally, lactylated in macrophages by EP300/P300 by using lactoyl-CoA directly derived from endogenous or exogenous lactate, leading to stimulates gene transcription.

It localises to the nucleus. The protein localises to the chromosome. In terms of biological role, core component of nucleosome. Nucleosomes wrap and compact DNA into chromatin, limiting DNA accessibility to the cellular machineries which require DNA as a template. Histones thereby play a central role in transcription regulation, DNA repair, DNA replication and chromosomal stability. DNA accessibility is regulated via a complex set of post-translational modifications of histones, also called histone code, and nucleosome remodeling. This Rattus norvegicus (Rat) protein is Histone H2A type 1-F.